The sequence spans 267 residues: MSRIATTFANLAKQNEKALVTFITAGDPDLETTEKLILELEKSGADLIELGVPFSDPMADGPTIQLSSERALCAGTTLPKILTLVKSVRQQTEIPLILMGYYNPVFLYGIERFVADAVSAGVDGVLLVDLPPEEAEEFKAAADREGLDVIFLLTPTSDEARIRKVANLGSGFIYYVSVTGVTGARTSVADTVFPDVKKIREHVTLPLVVGFGISDPVQAGRVAAVADGVVVGSALVKLFEEFRGDELRERLGGFVAALKAGVKAVGG.

Active-site proton acceptor residues include glutamate 49 and aspartate 60.

It belongs to the TrpA family. Tetramer of two alpha and two beta chains.

The enzyme catalyses (1S,2R)-1-C-(indol-3-yl)glycerol 3-phosphate + L-serine = D-glyceraldehyde 3-phosphate + L-tryptophan + H2O. The protein operates within amino-acid biosynthesis; L-tryptophan biosynthesis; L-tryptophan from chorismate: step 5/5. Its function is as follows. The alpha subunit is responsible for the aldol cleavage of indoleglycerol phosphate to indole and glyceraldehyde 3-phosphate. In Geotalea uraniireducens (strain Rf4) (Geobacter uraniireducens), this protein is Tryptophan synthase alpha chain.